The sequence spans 303 residues: Glycine--tRNA ligase alpha subunit (303 aa).

Belongs to the class-II aminoacyl-tRNA synthetase family. As to quaternary structure, tetramer of two alpha and two beta subunits.

It localises to the cytoplasm. The catalysed reaction is tRNA(Gly) + glycine + ATP = glycyl-tRNA(Gly) + AMP + diphosphate. The sequence is that of Glycine--tRNA ligase alpha subunit (glyQ) from Helicobacter pylori (strain ATCC 700392 / 26695) (Campylobacter pylori).